Consider the following 156-residue polypeptide: Small ribosomal subunit protein uS7 (156 aa).

This sequence belongs to the universal ribosomal protein uS7 family. As to quaternary structure, part of the 30S ribosomal subunit. Contacts proteins S9 and S11.

In terms of biological role, one of the primary rRNA binding proteins, it binds directly to 16S rRNA where it nucleates assembly of the head domain of the 30S subunit. Is located at the subunit interface close to the decoding center, probably blocks exit of the E-site tRNA. The polypeptide is Small ribosomal subunit protein uS7 (Tolumonas auensis (strain DSM 9187 / NBRC 110442 / TA 4)).